The chain runs to 180 residues: Stathmin-3 (180 aa).

Residues C22 and C24 are each lipidated (S-palmitoyl cysteine). Positions G38–G180 constitute an SLD domain. Residues S50, S60, S65, S68, S72, S73, and S81 each carry the phosphoserine modification. A compositionally biased stretch (low complexity) spans S60–P74. Positions S60–S81 are disordered. Residues P75 to S179 are a coiled coil.

It belongs to the stathmin family. Interacts with STAT3. Interacts with CLU (secreted form); this interaction may act as an important modulator during neuronal differentiation. N-terminal palmitoylation promotes specific anchoring to the cytosolic leaflet of Golgi membranes and subsequent vesicular trafficking along dendrites and axons. Neuronal Stathmins are substrates for palmitoyltransferases ZDHHC3, ZDHHC7 and ZDHHC15. In terms of tissue distribution, neuron specific.

The protein resides in the golgi apparatus. It localises to the cell projection. Its subcellular location is the growth cone. The protein localises to the axon. It is found in the cytoplasm. The protein resides in the cytosol. In terms of biological role, exhibits microtubule-destabilizing activity, which is antagonized by STAT3. The chain is Stathmin-3 (Stmn3) from Mus musculus (Mouse).